We begin with the raw amino-acid sequence, 242 residues long: Ribonuclease PH (242 aa).

Residues Arg-86 and 124–126 (GTR) each bind phosphate.

The protein belongs to the RNase PH family. As to quaternary structure, homohexameric ring arranged as a trimer of dimers.

The catalysed reaction is tRNA(n+1) + phosphate = tRNA(n) + a ribonucleoside 5'-diphosphate. Its function is as follows. Phosphorolytic 3'-5' exoribonuclease that plays an important role in tRNA 3'-end maturation. Removes nucleotide residues following the 3'-CCA terminus of tRNAs; can also add nucleotides to the ends of RNA molecules by using nucleoside diphosphates as substrates, but this may not be physiologically important. Probably plays a role in initiation of 16S rRNA degradation (leading to ribosome degradation) during starvation. The polypeptide is Ribonuclease PH (Photorhabdus laumondii subsp. laumondii (strain DSM 15139 / CIP 105565 / TT01) (Photorhabdus luminescens subsp. laumondii)).